The following is a 153-amino-acid chain: Ribonuclease P protein component (153 aa).

Belongs to the RnpA family. In terms of assembly, consists of a catalytic RNA component (M1 or rnpB) and a protein subunit.

The catalysed reaction is Endonucleolytic cleavage of RNA, removing 5'-extranucleotides from tRNA precursor.. Its function is as follows. RNaseP catalyzes the removal of the 5'-leader sequence from pre-tRNA to produce the mature 5'-terminus. It can also cleave other RNA substrates such as 4.5S RNA. The protein component plays an auxiliary but essential role in vivo by binding to the 5'-leader sequence and broadening the substrate specificity of the ribozyme. The protein is Ribonuclease P protein component of Helicobacter acinonychis (strain Sheeba).